Consider the following 238-residue polypeptide: 14-3-3 protein 2 (238 aa).

This sequence belongs to the 14-3-3 family.

Its function is as follows. Probable adapter protein. The sequence is that of 14-3-3 protein 2 from Entamoeba histolytica (strain ATCC 30459 / HM-1:IMSS / ABRM).